A 206-amino-acid chain; its full sequence is Large ribosomal subunit protein uL4 (206 aa).

The segment at 46 to 77 (GTRAQKDREQVRHSTKKPFKQKGTGRARAGMT) is disordered. The span at 58–70 (HSTKKPFKQKGTG) shows a compositional bias: basic residues.

The protein belongs to the universal ribosomal protein uL4 family. In terms of assembly, part of the 50S ribosomal subunit.

Its function is as follows. One of the primary rRNA binding proteins, this protein initially binds near the 5'-end of the 23S rRNA. It is important during the early stages of 50S assembly. It makes multiple contacts with different domains of the 23S rRNA in the assembled 50S subunit and ribosome. In terms of biological role, forms part of the polypeptide exit tunnel. The chain is Large ribosomal subunit protein uL4 from Polaromonas naphthalenivorans (strain CJ2).